The following is a 491-amino-acid chain: 3-epi-6-deoxocathasterone 23-monooxygenase CYP90D1 (491 aa).

A helical transmembrane segment spans residues 7-27 (LLFFSFFFFIIIVIFNKINGL). Cysteine 442 is a binding site for heme.

Belongs to the cytochrome P450 family. The cofactor is heme. As to expression, expressed in leaf vascular tissue.

It localises to the endoplasmic reticulum membrane. The enzyme catalyses 3-epi-6-deoxocathasterone + reduced [NADPH--hemoprotein reductase] + O2 = 6-deoxotyphasterol + oxidized [NADPH--hemoprotein reductase] + H2O + H(+). It carries out the reaction (22S,24R)-22-hydroxy-5alpha-ergostan-3-one + reduced [NADPH--hemoprotein reductase] + O2 = 3-dehydro-6-deoxoteasterone + oxidized [NADPH--hemoprotein reductase] + H2O + H(+). It participates in plant hormone biosynthesis; brassinosteroid biosynthesis. Its function is as follows. Involved in brassinosteroid (BR) biosynthesis. May convert teasterone (TE) to 3-dehydroteasterone (3DT, 3-DHT), or 6-deoxoteasterone (6-deoxoTE) to 3-dehydro-6-deoxoteasterone (6-deoxo3DT, 6-deoxo3DHT). C-23 hydroxylase that converts directly (22S,24R)-22-hydroxy-5-alpha-ergostan-3-one and 3-epi-6-deoxocathasterone to 3-dehydro-6-deoxoteasterone (6-deoxo3DT, 6-deoxo3DHT) and 6-deoxotyphasterol (6-deoxoTY), respectively. These C-23 hydroxylation shortcuts bypass campestanol, 6-deoxocathasterone, and 6-deoxoteasterone (6-deoxoTE). Also catalyzes the conversion of cathasterone to teasterone (TE), 6-deoxotyphasterol (6-deoxoTY) to 6-deoxocathasterone (6-deoxoCT), (22S,24R)-22-hydroxyergost-4-en-3-one (22-OH-4-en-3-one) to (22R,23R)-22,23-dihydroxy-campest-4-en-3-one (22,23-diOH-4-en-3-one) and (22S)-22-hydroxycampesterol (22-OHCR) to (22R,23R)-22,23-dihydroxycampesterol (22,23-diOHCR). The sequence is that of 3-epi-6-deoxocathasterone 23-monooxygenase CYP90D1 from Arabidopsis thaliana (Mouse-ear cress).